A 133-amino-acid polypeptide reads, in one-letter code: Small ribosomal subunit protein uS11 (133 aa).

This sequence belongs to the universal ribosomal protein uS11 family. In terms of assembly, part of the 30S ribosomal subunit. Interacts with proteins S7 and S18. Binds to IF-3.

Functionally, located on the platform of the 30S subunit, it bridges several disparate RNA helices of the 16S rRNA. Forms part of the Shine-Dalgarno cleft in the 70S ribosome. In Shouchella clausii (strain KSM-K16) (Alkalihalobacillus clausii), this protein is Small ribosomal subunit protein uS11.